The following is a 411-amino-acid chain: Glutamate dehydrogenase A (411 aa).

K102 is a catalytic residue.

The protein belongs to the Glu/Leu/Phe/Val dehydrogenases family.

The catalysed reaction is L-glutamate + NAD(+) + H2O = 2-oxoglutarate + NH4(+) + NADH + H(+). The enzyme catalyses L-glutamate + NADP(+) + H2O = 2-oxoglutarate + NH4(+) + NADPH + H(+). The protein is Glutamate dehydrogenase A (GDHA) of Nicotiana plumbaginifolia (Leadwort-leaved tobacco).